Reading from the N-terminus, the 316-residue chain is Acetylglutamate kinase (316 aa).

Residues 65-66 (GG), Arg-87, and Asn-179 contribute to the substrate site.

It belongs to the acetylglutamate kinase family. ArgB subfamily.

It localises to the cytoplasm. It carries out the reaction N-acetyl-L-glutamate + ATP = N-acetyl-L-glutamyl 5-phosphate + ADP. The protein operates within amino-acid biosynthesis; L-arginine biosynthesis; N(2)-acetyl-L-ornithine from L-glutamate: step 2/4. Functionally, catalyzes the ATP-dependent phosphorylation of N-acetyl-L-glutamate. The protein is Acetylglutamate kinase of Alkaliphilus metalliredigens (strain QYMF).